Reading from the N-terminus, the 159-residue chain is MFSRTIPAAARLFSTTGKPPAGIPVIVCGRTSQIGDVVREELQPEYEVTHLFLSPATAKSEIPALLRQTGSTTSTETDKSPAAIIMGGGYTQTDLQEIRAASQGPDTKPVAWLKVDPAKTPSSIPVGPEYGRAVAKRTKDRLDELVRNGGIDRDEVHFI.

In terms of biological role, negatively regulates mycelium growth and conidial formation and is required for stress tolerance. Plays a role in kojic acid synthesis in coordination with kojA, kojR and kojT where it acts upstream of kojA. The sequence is that of Kojic acid related protein 6 from Aspergillus oryzae (strain ATCC 42149 / RIB 40) (Yellow koji mold).